Reading from the N-terminus, the 97-residue chain is Large ribosomal subunit protein uL23 (97 aa).

Belongs to the universal ribosomal protein uL23 family. As to quaternary structure, part of the 50S ribosomal subunit. Contacts protein L29, and trigger factor when it is bound to the ribosome.

Functionally, one of the early assembly proteins it binds 23S rRNA. One of the proteins that surrounds the polypeptide exit tunnel on the outside of the ribosome. Forms the main docking site for trigger factor binding to the ribosome. The protein is Large ribosomal subunit protein uL23 of Acidithiobacillus ferrooxidans (strain ATCC 23270 / DSM 14882 / CIP 104768 / NCIMB 8455) (Ferrobacillus ferrooxidans (strain ATCC 23270)).